A 298-amino-acid chain; its full sequence is Small ribosomal subunit protein uS2 (298 aa).

The protein belongs to the universal ribosomal protein uS2 family.

This chain is Small ribosomal subunit protein uS2, found in Leifsonia xyli subsp. xyli (strain CTCB07).